The following is a 337-amino-acid chain: Terpene cyclase (337 aa).

Residues 5-25 traverse the membrane as a helical segment; the sequence is ASVIFLSLSVLAAVGVWGPFV. Asparagine 65 is a glycosylation site (N-linked (GlcNAc...) asparagine). The next 7 helical transmembrane spans lie at 72–92, 111–131, 149–169, 177–197, 222–242, 267–287, and 298–318; these read IAYCFMMQFLANVAVIPVILC, GLLSQLGTSAVIYPLYAMSFI, ALILNMAMGYALPAAITLNVL, IWGILAFTVYPICMKLMARII, VAGGVALQGHLWYLGTELGIF, LQVDYAITFLAMLLLAWHELI, and LGGLIIGWILVGPGATLAAAW.

Belongs to the membrane-bound ascI terpene cyclase family.

It is found in the membrane. It participates in antifungal biosynthesis. Functionally, cyclase; part of the gene cluster that mediates the biosynthesis of the tetrahydropyranyl antifungal agent lanomycin that acts as an inhibitor of CYP51 and blocks the ergosterol biosynthesis. The biosynthesis probably begins with the formation of an hexaketide, followed by methionine mediated alkylation of C-2 and C-6, and methylation of the reduced C-3 oxygen, pyran forming reductive ring closure, oxygenation of C-4, beta-keto reduction, enoyl reduction and dehydration of the remaining oxygens, and finally, acylation with glycine to complete the biosynthesis. The chain is Terpene cyclase from Pyrenophora dematioidea (Helminthosporium dematioideum).